Reading from the N-terminus, the 290-residue chain is 33 kDa chaperonin (290 aa).

2 disulfides stabilise this stretch: Cys235/Cys237 and Cys268/Cys271.

The protein belongs to the HSP33 family. Under oxidizing conditions two disulfide bonds are formed involving the reactive cysteines. Under reducing conditions zinc is bound to the reactive cysteines and the protein is inactive.

The protein resides in the cytoplasm. In terms of biological role, redox regulated molecular chaperone. Protects both thermally unfolding and oxidatively damaged proteins from irreversible aggregation. Plays an important role in the bacterial defense system toward oxidative stress. The sequence is that of 33 kDa chaperonin from Streptococcus gordonii (strain Challis / ATCC 35105 / BCRC 15272 / CH1 / DL1 / V288).